Consider the following 342-residue polypeptide: MKVEDFDFDLPEELIAQTPLLDRTSSRLMVLDKESGEIKDQHFTDIISYLNKGDALVLNDTRVLPARLHGIKDETGAHIEVLLLKQKEGNAWETLVKPAKRIRKGATITFGDGALKATCLEELEHGGRILEFSYEGIFYEVLEQLGEMPLPPYIKEQLADQDRYQTVYAKENGSAAAPTAGLHFTEELLAQISAKGVEIIFVTLHVGLGTFRPVDVEDTQNHKMHSEFYRLTEESADRINKIKSAGGKVVAVGTTSIRTLETIASRHDGKLIAESGWTDIFISPGYEFQAVDALITNFHLPKSTLIMLVSALSDRTKILAAYNHAVEQQYRFFSFGDAMFIH.

The protein belongs to the QueA family. In terms of assembly, monomer.

Its subcellular location is the cytoplasm. It catalyses the reaction 7-aminomethyl-7-carbaguanosine(34) in tRNA + S-adenosyl-L-methionine = epoxyqueuosine(34) in tRNA + adenine + L-methionine + 2 H(+). The protein operates within tRNA modification; tRNA-queuosine biosynthesis. Its function is as follows. Transfers and isomerizes the ribose moiety from AdoMet to the 7-aminomethyl group of 7-deazaguanine (preQ1-tRNA) to give epoxyqueuosine (oQ-tRNA). The protein is S-adenosylmethionine:tRNA ribosyltransferase-isomerase of Listeria innocua serovar 6a (strain ATCC BAA-680 / CLIP 11262).